The following is a 782-amino-acid chain: Translation initiation factor IF-2 (782 aa).

Over residues 1 to 14 (MSKNIDDKNEDGKK) the composition is skewed to basic and acidic residues. 2 disordered regions span residues 1–106 (MSKN…KKTY) and 132–174 (SIVS…AETE). A compositionally biased stretch (basic residues) spans 15–25 (IKIIKLRKKVV). The span at 31–43 (NDLSGKNNPSGST) shows a compositional bias: polar residues. Residues 44–61 (DLHKHNNKVEYSHSRDGR) are compositionally biased toward basic and acidic residues. Composition is skewed to polar residues over residues 86–106 (GYSQ…KKTY) and 133–142 (IVSSASSTDS). Residues 143–159 (ENSKELNRKLGEKKKQQ) are compositionally biased toward basic and acidic residues. Residues 280–453 (EKPPVITIMG…DMMLLKANPS (174 aa)) form the tr-type G domain. A G1 region spans residues 289–296 (GHVDHGKT). 289 to 296 (GHVDHGKT) serves as a coordination point for GTP. Residues 314–318 (GITQH) are G2. The tract at residues 335–338 (DTPG) is G3. GTP-binding positions include 335 to 339 (DTPGH) and 389 to 392 (NKID). Residues 389–392 (NKID) form a G4 region. The segment at 425 to 427 (SAL) is G5.

This sequence belongs to the TRAFAC class translation factor GTPase superfamily. Classic translation factor GTPase family. IF-2 subfamily.

It localises to the cytoplasm. In terms of biological role, one of the essential components for the initiation of protein synthesis. Protects formylmethionyl-tRNA from spontaneous hydrolysis and promotes its binding to the 30S ribosomal subunits. Also involved in the hydrolysis of GTP during the formation of the 70S ribosomal complex. The polypeptide is Translation initiation factor IF-2 (Borreliella afzelii (strain PKo) (Borrelia afzelii)).